We begin with the raw amino-acid sequence, 152 residues long: Nucleoside diphosphate kinase (152 aa).

Residues lysine 11, phenylalanine 59, arginine 87, threonine 93, arginine 104, and asparagine 114 each contribute to the ATP site. The active-site Pros-phosphohistidine intermediate is histidine 117.

It belongs to the NDK family. In terms of assembly, homotetramer. Mg(2+) serves as cofactor.

It is found in the cytoplasm. The catalysed reaction is a 2'-deoxyribonucleoside 5'-diphosphate + ATP = a 2'-deoxyribonucleoside 5'-triphosphate + ADP. It carries out the reaction a ribonucleoside 5'-diphosphate + ATP = a ribonucleoside 5'-triphosphate + ADP. Its function is as follows. Major role in the synthesis of nucleoside triphosphates other than ATP. The ATP gamma phosphate is transferred to the NDP beta phosphate via a ping-pong mechanism, using a phosphorylated active-site intermediate. The protein is Nucleoside diphosphate kinase of Prochlorococcus marinus (strain MIT 9301).